The primary structure comprises 322 residues: PI-PLC X domain-containing protein 3 (322 aa).

The region spanning 22–197 is the PI-PLC X-box domain; the sequence is TLHGIPLTNL…EYQVLVFYHN (176 aa). Active-site residues include His-37 and His-114.

The protein is PI-PLC X domain-containing protein 3 (plcxd3) of Danio rerio (Zebrafish).